Here is a 422-residue protein sequence, read N- to C-terminus: Regulator of sigma-W protease RasP (422 aa).

A run of 4 helical transmembrane segments spans residues 6-26, 175-195, 346-366, and 394-414; these read VIAF…GHLL, IAAG…MLGL, IVNL…VNLL, and EAFV…VVTW. Position 20 (H20) interacts with Zn(2+). Residue E21 is part of the active site. H24 is a binding site for Zn(2+). Residues 186–271 enclose the PDZ domain; it reads AYVILVMLGL…TLHISVTPEA (86 aa).

Belongs to the peptidase M50B family. It depends on Zn(2+) as a cofactor.

The protein resides in the cell membrane. Its function is as follows. Is responsible for site-2 cleavage of the RsiW anti-sigma factor. This results, after a third proteolytic step catalyzed by the ClpXP protease, in the release of SigW and the transcription activation of the genes under the control of the sigma-W factor. Can also cleave liberated signal peptides of PenP and Mpr, probably within in the cell membrane. This chain is Regulator of sigma-W protease RasP, found in Bacillus subtilis (strain 168).